The primary structure comprises 247 residues: Proteasome subunit alpha (247 aa).

It belongs to the peptidase T1A family. As to quaternary structure, the 20S proteasome core is composed of 14 alpha and 14 beta subunits that assemble into four stacked heptameric rings, resulting in a barrel-shaped structure. The two inner rings, each composed of seven catalytic beta subunits, are sandwiched by two outer rings, each composed of seven alpha subunits. The catalytic chamber with the active sites is on the inside of the barrel. Has a gated structure, the ends of the cylinder being occluded by the N-termini of the alpha-subunits. Is capped at one or both ends by the proteasome regulatory ATPase, PAN.

It is found in the cytoplasm. Its activity is regulated as follows. The formation of the proteasomal ATPase PAN-20S proteasome complex, via the docking of the C-termini of PAN into the intersubunit pockets in the alpha-rings, triggers opening of the gate for substrate entry. Interconversion between the open-gate and close-gate conformations leads to a dynamic regulation of the 20S proteasome proteolysis activity. Component of the proteasome core, a large protease complex with broad specificity involved in protein degradation. This chain is Proteasome subunit alpha, found in Methanosarcina thermophila.